Here is a 114-residue protein sequence, read N- to C-terminus: Chaperone protein YscY (114 aa).

In terms of assembly, binds to YscX.

Its subcellular location is the cytoplasm. In terms of biological role, required for Yop secretion. Functions probably as a chaperone which stabilizes YscX within the cell, before its secretion. This is Chaperone protein YscY (yscY) from Yersinia enterocolitica.